Reading from the N-terminus, the 77-residue chain is Putative snRNP Sm-like protein (77 aa).

The 73-residue stretch at 4–76 folds into the Sm domain; that stretch reads RPLDVLNRSL…VVFVSPAPGG (73 aa).

It belongs to the snRNP Sm proteins family.

The protein is Putative snRNP Sm-like protein of Archaeoglobus fulgidus (strain ATCC 49558 / DSM 4304 / JCM 9628 / NBRC 100126 / VC-16).